We begin with the raw amino-acid sequence, 58 residues long: Ribulose bisphosphate carboxylase large chain (58 aa).

Residues 1 to 2 (MS) constitute a propeptide that is removed on maturation. The residue at position 3 (Pro-3) is an N-acetylproline. N6,N6,N6-trimethyllysine is present on Lys-14.

Belongs to the RuBisCO large chain family. Type I subfamily. As to quaternary structure, heterohexadecamer of 8 large chains and 8 small chains.

It is found in the plastid. Its subcellular location is the chloroplast. It catalyses the reaction 2 (2R)-3-phosphoglycerate + 2 H(+) = D-ribulose 1,5-bisphosphate + CO2 + H2O. The catalysed reaction is D-ribulose 1,5-bisphosphate + O2 = 2-phosphoglycolate + (2R)-3-phosphoglycerate + 2 H(+). RuBisCO catalyzes two reactions: the carboxylation of D-ribulose 1,5-bisphosphate, the primary event in carbon dioxide fixation, as well as the oxidative fragmentation of the pentose substrate in the photorespiration process. Both reactions occur simultaneously and in competition at the same active site. The protein is Ribulose bisphosphate carboxylase large chain (rbcL) of Euonymus maackii (Maack's spindle tree).